We begin with the raw amino-acid sequence, 350 residues long: Chorismate synthase (350 aa).

2 residues coordinate NADP(+): Arg-39 and Arg-45. The interval 85-104 (KDKKVPPVTRPRPGHADLPG) is disordered. FMN contacts are provided by residues 119 to 121 (RAS), 213 to 214 (QG), Gly-258, 273 to 277 (KPIPT), and Arg-299.

This sequence belongs to the chorismate synthase family. As to quaternary structure, homotetramer. Requires FMNH2 as cofactor.

It catalyses the reaction 5-O-(1-carboxyvinyl)-3-phosphoshikimate = chorismate + phosphate. It participates in metabolic intermediate biosynthesis; chorismate biosynthesis; chorismate from D-erythrose 4-phosphate and phosphoenolpyruvate: step 7/7. Functionally, catalyzes the anti-1,4-elimination of the C-3 phosphate and the C-6 proR hydrogen from 5-enolpyruvylshikimate-3-phosphate (EPSP) to yield chorismate, which is the branch point compound that serves as the starting substrate for the three terminal pathways of aromatic amino acid biosynthesis. This reaction introduces a second double bond into the aromatic ring system. This is Chorismate synthase from Caldanaerobacter subterraneus subsp. tengcongensis (strain DSM 15242 / JCM 11007 / NBRC 100824 / MB4) (Thermoanaerobacter tengcongensis).